A 321-amino-acid polypeptide reads, in one-letter code: MKFAKKYEKYMKGMDEELPGVGLKRLKKLLKKCRSDLQSHENDGSSAGRCPGHCSVCDGSFFPSLLNEMSAVVGCFNEKAKKLLELHLASGFKKYTMWFTSKGHKSHGALIQQGKDLVTYAIINAVAMRKILKKYDKIHYSKQGQEFKAQAQSLHIEILQSPWLCELMAFYMNLRRSKKNNGAMELFGDCSLVFDDDKPTISCNLFDSMRVDISLTCSICLDTVFDPVALSCGHIYCYLCSCSAASVTIVDGLKSAERKSKCPLCRQAGVFPNAVHLDELNMLLSYSCPEYWEKRIQMERVERVRLAKEHWESQCRAFLGM.

An SPX domain is found at 1 to 149 (MKFAKKYEKY…YSKQGQEFKA (149 aa)). An RING-type zinc finger spans residues 217–266 (CSICLDTVFDPVALSCGHIYCYLCSCSAASVTIVDGLKSAERKSKCPLCR).

It belongs to the RING-type zinc finger family.

It carries out the reaction S-ubiquitinyl-[E2 ubiquitin-conjugating enzyme]-L-cysteine + [acceptor protein]-L-lysine = [E2 ubiquitin-conjugating enzyme]-L-cysteine + N(6)-ubiquitinyl-[acceptor protein]-L-lysine.. It functions in the pathway protein modification; protein ubiquitination. The sequence is that of Probable E3 ubiquitin-protein ligase BAH1-like 1 from Oryza sativa subsp. indica (Rice).